The following is a 157-amino-acid chain: uncharacterized protein (157 aa).

The N-acetyltransferase domain occupies 9-146 (LLINYKTLDE…GDFYVWHPET (138 aa)).

This is an uncharacterized protein from Bacillus cereus (strain ZK / E33L).